A 253-amino-acid polypeptide reads, in one-letter code: Snake venom serine proteinase 14 (253 aa).

The N-terminal stretch at 1–18 (MVLIRVLANLLILQLSYA) is a signal peptide. A propeptide spanning residues 19-24 (QKSSEL) is cleaved from the precursor. The region spanning 25-244 (VIGGDECNIN…YTDWIQSIIA (220 aa)) is the Peptidase S1 domain. Disulfide bonds link cysteine 31-cysteine 158, cysteine 49-cysteine 65, cysteine 93-cysteine 251, cysteine 137-cysteine 205, cysteine 169-cysteine 184, and cysteine 195-cysteine 220. Catalysis depends on charge relay system residues histidine 64 and aspartate 105. 3 N-linked (GlcNAc...) asparagine glycosylation sites follow: asparagine 116, asparagine 117, and asparagine 149. Serine 199 functions as the Charge relay system in the catalytic mechanism.

The protein belongs to the peptidase S1 family. Snake venom subfamily. Monomer. Expressed by the venom gland.

The protein localises to the secreted. Functionally, snake venom serine protease that may act in the hemostasis system of the prey. This chain is Snake venom serine proteinase 14, found in Crotalus adamanteus (Eastern diamondback rattlesnake).